Consider the following 160-residue polypeptide: Vegetative-specific protein V4 (160 aa).

Tandem repeats lie at residues 151–153 (NQP), 154–156 (NQP), and 157–159 (NQG). The tract at residues 151 to 159 (NQPNQPNQG) is 3 X 3 AA tandem repeats of N-Q-[PG].

Its function is as follows. Unknown. Its expression during growth is not required for growth but for the proper initiation of development, therefore playing a role in the transition from growth to development. The polypeptide is Vegetative-specific protein V4 (lmcB) (Dictyostelium discoideum (Social amoeba)).